Reading from the N-terminus, the 98-residue chain is Ribonuclease kappa (98 aa).

Transmembrane regions (helical) follow at residues alanine 13–phenylalanine 33 and valine 65–cysteine 85.

The protein belongs to the RNase K family. Interacts with the proton translocation complex V0 of the V-ATPase. Interacts with ATP6AP1. Expressed in brain (at protein level).

It localises to the endomembrane system. It is found in the cytoplasmic vesicle. Its subcellular location is the clathrin-coated vesicle membrane. Its function is as follows. Endoribonuclease which preferentially cleaves ApU and ApG phosphodiester bonds. Hydrolyzes UpU bonds at a lower rate. Regulates the activity of vacuolar (H+)-ATPase (V-ATPase) which is responsible for acidifying and maintaining the pH of intracellular compartments. Required at an early stage of receptor-mediated endocytosis. The polypeptide is Ribonuclease kappa (RNASEK) (Bos taurus (Bovine)).